The primary structure comprises 232 residues: Ribosomal RNA small subunit methyltransferase G (232 aa).

S-adenosyl-L-methionine contacts are provided by residues G93, L98, 144 to 145, and R163; that span reads VE.

It belongs to the methyltransferase superfamily. RNA methyltransferase RsmG family.

The protein localises to the cytoplasm. The enzyme catalyses guanosine(527) in 16S rRNA + S-adenosyl-L-methionine = N(7)-methylguanosine(527) in 16S rRNA + S-adenosyl-L-homocysteine. Specifically methylates the N7 position of guanine in position 527 of 16S rRNA. The chain is Ribosomal RNA small subunit methyltransferase G from Burkholderia pseudomallei (strain 1710b).